Here is a 1143-residue protein sequence, read N- to C-terminus: Serine/threonine-protein kinase BRI1-like 2 (1143 aa).

A signal peptide spans 1 to 31; the sequence is MTTSPIRVRIRTRIQISFIFLLTHLSQSSSS. Over 32 to 756 the chain is Extracellular; the sequence is DQSSLKTDSL…GTRAASWANS (725 aa). The Cys pair 1 signature appears at 68-75; it reads CQFSGVTC. 24 LRR repeats span residues 77–101, 102–125, 126–150, 151–175, 177–200, 203–227, 228–250, 251–275, 277–299, 300–324, 326–349, 351–373, 374–398, 399–422, 424–446, 447–470, 472–493, 494–518, 520–542, 570–594, 610–634, 635–660, 662–681, and 682–707; these read GGRVTEINLSGSGLSGIVSFNAFTS, LDSLSVLKLSENFFVLNSTSLLLL, PLTLTHLELSSSGLIGTLPENFFSK, YSNLISITLSYNNFTGKLPNDLFLS, KKLQTLDLSYNNITGPISGLTIPL, CVSMTYLDFSGNSISGYISDSLINC, TNLKSLNLSYNNFDGQIPKSFGE, LKLLQSLDLSHNRLTGWIPPEIGDT, RSLQNLRLSYNNFTGVIPESLSS, CSWLQSLDLSNNNISGPFPNTILRS, GSLQILLLSNNLISGDFPTSISAC, SLRIADFSSNRFSGVIPPDLCPG, AASLEELRLPDNLVTGEIPPAISQC, SELRTIDLSLNYLNGTIPPEIGNL, KLEQFIAWYNNIAGEIPPEIGKL, QNLKDLILNNNQLTGEIPPEFFNC, NIEWVSFTSNRLTGEVPKDFGI, LSRLAVLQLGNNNFTGEIPPELGKC, TLVWLDLNTNHLTGEIPPRLGRQ, VGGLVEFSGIRPERLLQIPSLKSCD, YQTIEYLDLSYNQLRGKIPDEIGEM, IALQVLELSHNQLSGEIPFTIGQLKN, GVFDASDNRLQGQIPESFSN, and LSFLVQIDLSNNELTGPIPQRGQLST. N-linked (GlcNAc...) asparagine glycans are attached at residues Asn-84 and Asn-118. Asn-163, Asn-188, Asn-226, and Asn-234 each carry an N-linked (GlcNAc...) asparagine glycan. Residues Asn-288 and Asn-312 are each glycosylated (N-linked (GlcNAc...) asparagine). Asn-412 carries N-linked (GlcNAc...) asparagine glycosylation. N-linked (GlcNAc...) asparagine glycosylation occurs at Asn-469. Asn-506 carries an N-linked (GlcNAc...) asparagine glycan. Residue Asn-681 is glycosylated (N-linked (GlcNAc...) asparagine). The short motif at 720–727 is the Cys pair 2 element; that stretch reads CGVPLPEC. Residues 757 to 777 traverse the membrane as a helical segment; sequence IVLGVLISAASVCILIVWAIA. Topologically, residues 778–1143 are cytoplasmic; the sequence is VRARRRDADD…NNSHSHSNSL (366 aa). Thr-835 carries the post-translational modification Phosphothreonine. The 292-residue stretch at 838–1129 folds into the Protein kinase domain; sequence FSAASMIGHG…LQVVASLREL (292 aa). Residues 844–852 and Lys-866 contribute to the ATP site; that span reads IGHGGFGEV. At Tyr-911 the chain carries Phosphotyrosine. Catalysis depends on Asp-966, which acts as the Proton acceptor. Ser-1001 is modified (phosphoserine). A Phosphotyrosine modification is found at Tyr-1009.

It belongs to the protein kinase superfamily. Ser/Thr protein kinase family. In terms of assembly, interacts with TTL3. Expressed in provascular and procambial sites throughout plant development. Expressed throughout globe- to heart-staged embryos. Then, it is restricted to procambial cells by the late torpedo stage, and this pattern persists throughout the duration of embryo development. After germination, it is expressed not only in procambial cells throughout the plant but also in all lateral organ primordia before the onset of vascularization.

It localises to the cell membrane. The enzyme catalyses L-seryl-[protein] + ATP = O-phospho-L-seryl-[protein] + ADP + H(+). It catalyses the reaction L-threonyl-[protein] + ATP = O-phospho-L-threonyl-[protein] + ADP + H(+). Its function is as follows. Receptor with a serine/threonine-protein kinase activity, which may transduce extracellular spatial and temporal signals into downstream cell differentiation responses in provascular and procambial cells. In contrast to BRI1, BRL1 and BRL3, it does not bind brassinolide. In Arabidopsis thaliana (Mouse-ear cress), this protein is Serine/threonine-protein kinase BRI1-like 2.